Here is a 133-residue protein sequence, read N- to C-terminus: Small ribosomal subunit protein uS8 (133 aa).

This sequence belongs to the universal ribosomal protein uS8 family. As to quaternary structure, part of the 30S ribosomal subunit. Contacts proteins S5 and S12.

One of the primary rRNA binding proteins, it binds directly to 16S rRNA central domain where it helps coordinate assembly of the platform of the 30S subunit. This Prochlorococcus marinus (strain MIT 9515) protein is Small ribosomal subunit protein uS8.